Reading from the N-terminus, the 518-residue chain is Protein MGF 505-6R (518 aa).

ANK repeat units lie at residues 54–83 (SIND…NLHY), 129–158 (ECDF…LLNV), 261–290 (SVNR…IPRG), 292–322 (IERL…KVKN), and 324–351 (KKLV…NLVD).

The protein belongs to the asfivirus MGF 505 family.

Plays a role in virus cell tropism, and may be required for efficient virus replication in macrophages. This is Protein MGF 505-6R from Ornithodoros (relapsing fever ticks).